The sequence spans 314 residues: MARRRKGRPINGVILLDKPTGISSNDALQKVKRIYFAEKAGHTGALDPLATGMLPICLGEATKFSQFLLDSDKRYRVIAKLGERTNTSDSDGEVVETRPVDVTLEKLEACIEKFRGESDQVPSMFSALKYQGKPLYEYARKGIEVPRESRKITVYEIILHRFEGDEVEMEVHCSKGTYIRTIVDDLGEMLGCGAHVTMLRRTAVAKYPYEKMVTLEQLNELLEQAHREEIAPRELLDPLLMPMDTAVEDLPEVNLIPELADMVQHGQPVQVLGAPEQGFLRLTMGEEHLFIGVGEMNDDGKIAPKRLVVFRDEE.

Catalysis depends on aspartate 47, which acts as the Nucleophile.

This sequence belongs to the pseudouridine synthase TruB family. Type 1 subfamily.

It carries out the reaction uridine(55) in tRNA = pseudouridine(55) in tRNA. In terms of biological role, responsible for synthesis of pseudouridine from uracil-55 in the psi GC loop of transfer RNAs. This Vibrio parahaemolyticus serotype O3:K6 (strain RIMD 2210633) protein is tRNA pseudouridine synthase B.